Here is a 1943-residue protein sequence, read N- to C-terminus: Sickle tail protein homolog (1943 aa).

Disordered regions lie at residues 1–79 (MEEN…KEIL) and 112–177 (QERL…RSTN). Positions 38–47 (AECRRTKERL) are enriched in basic and acidic residues. Positions 48–62 (SNGNSRGSVSKSSRN) are enriched in polar residues. Ser-169 bears the Phosphoserine mark. At Tyr-244 the chain carries Phosphotyrosine. The tract at residues 290–331 (ARGDGPGAPRPGSTAHPPHAIPNSPPSTPVPHSMPPSPSRIP) is disordered. Residues 308–328 (HAIPNSPPSTPVPHSMPPSPS) are compositionally biased toward pro residues. Ser-357 is a glycosylation site (O-linked (GlcNAc) serine). Phosphoserine occurs at positions 361 and 365. Tyr-393 carries the post-translational modification Phosphotyrosine. The interval 456 to 476 (RKYPDSHLPTLGSKTPPASPH) is disordered. The residue at position 470 (Thr-470) is a Phosphothreonine. Phosphoserine is present on residues Ser-474 and Ser-526. Coiled coils occupy residues 557–581 (RETRERMQAMEKQIASLTGLVQSAL) and 644–685 (MSLL…ELEI). Ser-809 is subject to Phosphoserine. The interval 848 to 874 (VLKSQEEAAHTSGQPFHSTGAPGDAKS) is disordered. Residues 957–985 (SAKNRAVSIEKAEKKWEEKRQNLDHYNGK) adopt a coiled-coil conformation. Disordered stretches follow at residues 1003-1230 (PNLE…SDAS), 1305-1329 (KTKEMEKQNTDKCHVSSHTRLTESS), and 1352-1377 (PKEARHANVNPNEDGESSSSSPTEEN). Phosphoserine occurs at positions 1027, 1030, 1033, and 1044. A compositionally biased stretch (pro residues) spans 1044–1053 (SPPPPPPPPR). Composition is skewed to basic and acidic residues over residues 1155–1167 (EPSRADSHVKDTR), 1174–1192 (PKEKKNLEFFHEDVRKSDV), and 1305–1318 (KTKEMEKQNTDKCH). Residues 1368 to 1377 (SSSSSPTEEN) show a composition bias toward polar residues. Ser-1461 is subject to Phosphoserine. Positions 1464–1490 (FEECDEELERMMMEEKIEEEEEEENGD) form a coiled coil. Disordered regions lie at residues 1481 to 1572 (EEEE…PKKK), 1606 to 1660 (EEEE…EIRK), and 1677 to 1943 (ENTI…KETS). 2 stretches are compositionally biased toward polar residues: residues 1491–1501 (SVVQNNNTSQM) and 1512–1533 (RTGQQVETKSQPHSLATETRNP). 2 stretches are compositionally biased toward basic and acidic residues: residues 1539–1548 (NRTELNKFSH) and 1612–1625 (GTLKQHKEAKRFEI). Positions 1643–1653 (QPSIESTSPIS) are enriched in polar residues. Positions 1656 to 1686 (DEIRKNTYRTLDSLEQTIKQLENTISEMSPK) form a coiled coil. Composition is skewed to polar residues over residues 1691-1706 (TSCSSNRDSVASSSHI) and 1731-1747 (IPSASRKGSSGAPQTSR). The residue at position 1739 (Ser-1739) is a Phosphoserine. The segment covering 1763-1775 (KPGKQSKLQDPRQ) has biased composition (basic and acidic residues). Residues 1806-1825 (SPSSGKSSSLPSSSGDSSNL) are compositionally biased toward low complexity. Composition is skewed to polar residues over residues 1834-1843 (SIASNPLSPQ) and 1853-1869 (LIPSVSNGSLKFQSLTH). Ser-1841 bears the Phosphoserine mark. A compositionally biased stretch (low complexity) spans 1892-1905 (SFSSSPPSPASSVS). 3 positions are modified to phosphoserine: Ser-1896, Ser-1899, and Ser-1902. Positions 1906–1943 (LNQGAKGTRTIHTPSLTSYKAQNGSSSKATPSTAKETS) are enriched in polar residues.

As to quaternary structure, interacts with CPNE4 (via VWFA domain).

Its subcellular location is the cytoplasm. The protein localises to the cytoskeleton. The protein resides in the microtubule organizing center. It is found in the centrosome. In terms of biological role, required for normal development of intervertebral disks. The protein is Sickle tail protein homolog (KIAA1217) of Homo sapiens (Human).